The chain runs to 749 residues: Protein SWAP (749 aa).

The segment at 8–124 (SNVHVQEYKD…RNDQRNAIGF (117 aa)) is dry CEEERYL. Over residues 105–118 (EQEKEEEEKRRNDQ) the composition is skewed to basic and acidic residues. The segment at 105–149 (EQEKEEEEKRRNDQRNAIGFDYGTGKVKARESDSEDEPFEPPEGI) is disordered. An SURP motif 1 repeat occupies 166–209 (IIEKTASFIVANGTQMEIVIKAKQRNNAEQFGFLEFDHRLNPFY). A disordered region spans residues 256–310 (HGSDSEDSDSDYELHPSLLSGGAKRPVTPEKPGAIGPRKKPVEPEKPPDFTLKPV). The SURP motif 2 repeat unit spans residues 391 to 431 (ILNSYAEHVAQRGLEAEASLAAREDLQLHFMEPKSPYYSYY). Low complexity predominate over residues 458-478 (PAPPSAVSSPGPSSLMSLNLS). Disordered regions lie at residues 458–498 (PAPP…SSRL), 537–592 (LRND…QVDR), and 608–749 (KAKK…DRRR). Residues 538-552 (RNDEPRDESSFRFDP) are compositionally biased toward basic and acidic residues. Polar residues predominate over residues 560–569 (PSDTTANFSD). Positions 574-583 (FPPPTPPVIP) are enriched in pro residues. 2 stretches are compositionally biased toward basic and acidic residues: residues 608–659 (KAKK…RSLD) and 679–689 (EEMKRTDEDRE). Basic residues-rich tracts occupy residues 690 to 704 (RKRH…RRSR) and 714 to 749 (EHKK…DRRR).

Functionally, it is a regulator of pre-mRNA splicing (and, possibly, of other RNA processing events). It may regulate its own expression at the level of RNA processing. The protein is Protein SWAP (swp-1) of Caenorhabditis elegans.